The chain runs to 173 residues: MQTPPVKDGPRINEDIRVPRVLLIDHNGEKQGEMPISAALEAAEEAGLDLVEIVPNANPPVCKILDYGKFKFQEQKKKNEARKRQKIVELKEIKLRPNIDIHDYDVKAKSMHRFFEEGDKVKVTLRFRGREMAHPELGMKLLLKVKADFDEIAKVEYEPRMEGRQMIMILAPR.

The protein belongs to the IF-3 family. Monomer.

It localises to the cytoplasm. In terms of biological role, IF-3 binds to the 30S ribosomal subunit and shifts the equilibrium between 70S ribosomes and their 50S and 30S subunits in favor of the free subunits, thus enhancing the availability of 30S subunits on which protein synthesis initiation begins. The chain is Translation initiation factor IF-3 from Caulobacter sp. (strain K31).